Here is a 356-residue protein sequence, read N- to C-terminus: MKIGFLSRWGATCGVGMHAEILAREFIRMGHEVVVFAPTEESASKEVKYYKRTEAQDPEFVKREIYTEVDNVTEEGWVKEEEILKENLDLLIIETFWRVPVKPLTRLIEKLKIPVISVFHEANIFKAREVVKLPCDKIVVFDRRFYDEILEFYEIPREKVEVISYPVMKPYDAEPERPVSEDKFLFFSFGRQPVEEYCDFLNALKKLRKRFDNVHYWIIRSDGRVDYEAEWITQWQKRPTVEKLYSYLKGSNVHLLPKGNTPNVVVSSTLYQIIASETPIVIRDSRFVETIETDVYGFGPIVKYRNIHDLVHKLELLMLDRELVEDIKKEVRVFVEKYGGDKIAQEFLDLAKTITK.

It belongs to the MDIP synthase family. Mg(2+) serves as cofactor.

The catalysed reaction is bis(myo-inositol) 1,3'-phosphate + GDP-alpha-D-mannose = 2-O-(beta-D-mannosyl)-bis(myo-inositol) 1,3'-phosphate + GDP + H(+). The enzyme catalyses 2-O-(beta-D-mannosyl)-bis(myo-inositol) 1,3'-phosphate + GDP-alpha-D-mannose = 2-O-(beta-D-mannosyl-(1-&gt;2)-beta-D-mannosyl)-bis(myo-inositol) 1,3'-phosphate + GDP + H(+). It carries out the reaction bis(myo-inositol) 1,3'-phosphate + 2 GDP-alpha-D-mannose = 2-O-(beta-D-mannosyl-(1-&gt;2)-beta-D-mannosyl)-bis(myo-inositol) 1,3'-phosphate + 2 GDP + 2 H(+). Catalyzes the transfer of the mannosyl group from GDP-mannose to di-myo-inositol-1,3'-phosphate (DIP), producing mannosyl-di-myo-inositol phosphate (MDIP). Can also use MDIP as an acceptor of a second mannose residue, yielding di-mannosyl-di-myo-inositol phosphate (MMDIP). Minor amounts of the tri-mannosylated form are also formed. The protein is GDP-mannose:di-myo-inositol-1,3'-phosphate beta-1,2-mannosyltransferase of Thermotoga maritima (strain ATCC 43589 / DSM 3109 / JCM 10099 / NBRC 100826 / MSB8).